Reading from the N-terminus, the 184-residue chain is MLDAFSRAVVSADASTSTVSDIAALRAFVASGNRRLDAVNAIASNASCMVSDAVAGMICENQGLIQAGGNCYPNRRMAACLRDAEIVLRYVTYALLAGDASVLDDRCLNGLKETYAALGVPTTSTVRAVQIMKAQAAAHIQDTPSEARAGAKLRKMGTPVVEDRCASLVAEASSYFDRVISALS.

(2R,3E)-phycoerythrobilin-binding residues include Cys-48 and Cys-59. Asn-70 bears the N4-methylasparagine mark. 2 residues coordinate (2R,3E)-phycoerythrobilin: Cys-80 and Cys-165.

The protein belongs to the phycobiliprotein family. Heterodimer of an alpha and a beta chain. Contains three covalently linked bilin chromophores.

The protein resides in the cellular thylakoid membrane. Functionally, light-harvesting photosynthetic bile pigment-protein from the phycobiliprotein complex. The sequence is that of C-phycoerythrin beta chain (cpeB) from Microchaete diplosiphon (Fremyella diplosiphon).